A 210-amino-acid chain; its full sequence is Superoxide dismutase [Mn], mitochondrial (210 aa).

4 residues coordinate Mn(2+): H30, H78, D166, and H170.

This sequence belongs to the iron/manganese superoxide dismutase family. Homotetramer. Mn(2+) serves as cofactor. The N-terminus is blocked.

It is found in the mitochondrion matrix. The enzyme catalyses 2 superoxide + 2 H(+) = H2O2 + O2. Destroys superoxide anion radicals which are normally produced within the cells and which are toxic to biological systems. The chain is Superoxide dismutase [Mn], mitochondrial (SOD) from Penicillium chrysogenum (Penicillium notatum).